The chain runs to 148 residues: UPF0178 protein lpg0089 (148 aa).

This sequence belongs to the UPF0178 family.

This Legionella pneumophila subsp. pneumophila (strain Philadelphia 1 / ATCC 33152 / DSM 7513) protein is UPF0178 protein lpg0089.